We begin with the raw amino-acid sequence, 269 residues long: Putative carbamate hydrolase RutD (269 aa).

The AB hydrolase-1 domain maps to 26 to 144 (VVLLSSGLGG…CFDTRLHLLN (119 aa)).

This sequence belongs to the AB hydrolase superfamily. Hydrolase RutD family.

It catalyses the reaction carbamate + 2 H(+) = NH4(+) + CO2. Functionally, involved in pyrimidine catabolism. May facilitate the hydrolysis of carbamate, a reaction that can also occur spontaneously. This chain is Putative carbamate hydrolase RutD, found in Caulobacter vibrioides (strain ATCC 19089 / CIP 103742 / CB 15) (Caulobacter crescentus).